The chain runs to 126 residues: Large ribosomal subunit protein uL14 (126 aa).

This sequence belongs to the universal ribosomal protein uL14 family. As to quaternary structure, part of the 50S ribosomal subunit. Forms a cluster with proteins L3 and L19. In the 70S ribosome, L14 and L19 interact and together make contacts with the 16S rRNA in bridges B5 and B8.

Functionally, binds to 23S rRNA. Forms part of two intersubunit bridges in the 70S ribosome. The sequence is that of Large ribosomal subunit protein uL14 from Persephonella marina (strain DSM 14350 / EX-H1).